The chain runs to 236 residues: Glucosamine-6-phosphate deaminase (236 aa).

D62 serves as the catalytic Proton acceptor; for enolization step. N128 acts as the For ring-opening step in catalysis. H130 functions as the Proton acceptor; for ring-opening step in the catalytic mechanism. Catalysis depends on E135, which acts as the For ring-opening step.

The protein belongs to the glucosamine/galactosamine-6-phosphate isomerase family. NagB subfamily.

The catalysed reaction is alpha-D-glucosamine 6-phosphate + H2O = beta-D-fructose 6-phosphate + NH4(+). It participates in amino-sugar metabolism; N-acetylneuraminate degradation; D-fructose 6-phosphate from N-acetylneuraminate: step 5/5. In terms of biological role, catalyzes the reversible isomerization-deamination of glucosamine 6-phosphate (GlcN6P) to form fructose 6-phosphate (Fru6P) and ammonium ion. The protein is Glucosamine-6-phosphate deaminase of Oenococcus oeni (strain ATCC BAA-331 / PSU-1).